Here is a 229-residue protein sequence, read N- to C-terminus: Protein fmp52-2, mitochondrial (229 aa).

A mitochondrion-targeting transit peptide spans 1–44 (MTAAAVFGCTGAVGSQILATLLASDAFSSVATVSRKLPTAESPK).

The protein belongs to the FMP52 family.

Its subcellular location is the mitochondrion outer membrane. The chain is Protein fmp52-2, mitochondrial (fmp522) from Aspergillus terreus (strain NIH 2624 / FGSC A1156).